The chain runs to 496 residues: RNA-binding motif protein, Y chromosome, family 1 member E (496 aa).

The RRM domain occupies 8–85 (GKLFIGGLNR…KAIKVEQAKK (78 aa)). Disordered stretches follow at residues 67-348 (DMNG…PHRD) and 453-496 (DQRN…SSRY). Low complexity-rich tracts occupy residues 97–114 (PASS…SARG) and 149–159 (PVKRGPSSRSG). The segment covering 175 to 184 (NSWMGSQGPM) has biased composition (polar residues). Composition is skewed to basic and acidic residues over residues 204–214 (RNDRMSTRHDG), 242–253 (DNGHSNRDEHSS), 276–289 (AYRD…DESY), 313–326 (GYRD…HESY), 335–348 (SSRE…PHRD), and 484–496 (GESR…SSRY).

Interacts with splicing factor proteins SFRS3/SRP20, TRA2B/SFRS10, KHDRBS1/SAM68 and KHDRBS3. As to expression, testis-specific.

The protein resides in the nucleus. RNA-binding protein which may be involved in spermatogenesis. Required for sperm development, possibly by participating in pre-mRNA splicing in the testis. The protein is RNA-binding motif protein, Y chromosome, family 1 member E (RBMY1E) of Homo sapiens (Human).